A 132-amino-acid polypeptide reads, in one-letter code: UPF0299 membrane protein YohJ (132 aa).

Helical transmembrane passes span 8 to 28 (IWQY…GIFI), 31 to 51 (LLPV…VLLA), 63 to 83 (GCYL…VGVM), and 93 to 113 (FGPV…VVSW).

It belongs to the UPF0299 family.

Its subcellular location is the cell inner membrane. The protein is UPF0299 membrane protein YohJ of Escherichia fergusonii (strain ATCC 35469 / DSM 13698 / CCUG 18766 / IAM 14443 / JCM 21226 / LMG 7866 / NBRC 102419 / NCTC 12128 / CDC 0568-73).